Here is a 92-residue protein sequence, read N- to C-terminus: Small ribosomal subunit protein uS19 (92 aa).

Belongs to the universal ribosomal protein uS19 family.

Its function is as follows. Protein S19 forms a complex with S13 that binds strongly to the 16S ribosomal RNA. The chain is Small ribosomal subunit protein uS19 from Beijerinckia indica subsp. indica (strain ATCC 9039 / DSM 1715 / NCIMB 8712).